The sequence spans 366 residues: RISC-loading complex subunit TARBP2 (366 aa).

3 sufficient for interaction with PRKRA regions span residues 22–105 (MLAA…EPAL), 152–234 (SPQQ…DARD), and 287–366 (LGAL…AGSK). One can recognise a DRBM 1 domain in the interval 30–97 (TPISLLQEYG…AEVALKHLKG (68 aa)). Positions 135–158 (PSAVPTRSSPMEVQPPVSPQQSEC) are disordered. Residue Ser152 is modified to Phosphoserine. DRBM domains are found at residues 159 to 227 (NPVG…RVHT) and 293 to 361 (ACCS…YLKI). The sufficient for interaction with DICER1 stretch occupies residues 228-366 (VPLDARDGNE…QYLKIMAGSK (139 aa)).

This sequence belongs to the TARBP2 family. As to quaternary structure, self-associates. Component of the RISC loading complex (RLC), or micro-RNA (miRNA) loading complex (miRLC), which is composed of DICER1, AGO2 and TARBP2. Note that the trimeric RLC/miRLC is also referred to as RISC. Interacts with EIF2AK2/PKR and inhibits its protein kinase activity. Interacts with DHX9 and PRKRA. Interacts with DICER1, AGO2, MOV10, EIF6 and RPL7A (60S ribosome subunit); they form a large RNA-induced silencing complex (RISC). Interacts with IRF7; this interaction prevents IRF7 phosphorylation and activation.

Its subcellular location is the cytoplasm. The protein resides in the perinuclear region. The protein localises to the nucleus. Required for formation of the RNA induced silencing complex (RISC). Component of the RISC loading complex (RLC), also known as the micro-RNA (miRNA) loading complex (miRLC), which is composed of DICER1, AGO2 and TARBP2. Within the RLC/miRLC, DICER1 and TARBP2 are required to process precursor miRNAs (pre-miRNAs) to mature miRNAs and then load them onto AGO2. AGO2 bound to the mature miRNA constitutes the minimal RISC and may subsequently dissociate from DICER1 and TARBP2. May also play a role in the production of short interfering RNAs (siRNAs) from double-stranded RNA (dsRNA) by DICER1. Binds in vitro to the PRM1 3'-UTR. Seems to act as a repressor of translation. For some pre-miRNA substrates, may also alter the choice of cleavage site by DICER1. Negatively regulates IRF7-mediated IFN-beta signaling triggered by viral infection by inhibiting the phosphorylation of IRF7 and promoting its 'Lys'-48-linked ubiquitination and degradation. This is RISC-loading complex subunit TARBP2 from Bos taurus (Bovine).